The following is a 627-amino-acid chain: Neutral endopeptidase (627 aa).

In terms of domain architecture, Peptidase M13 spans 1 to 627 (MTRIQDDLFA…RAPENRLKIW (627 aa)). Histidine 475 is a binding site for Zn(2+). Residue glutamate 476 is part of the active site. Zn(2+) is bound by residues histidine 479 and glutamate 535. Aspartate 539 serves as the catalytic Proton donor.

This sequence belongs to the peptidase M13 family. In terms of assembly, monomer. Requires Zn(2+) as cofactor.

Its function is as follows. Endopeptidase with broad substrate specificity for several oligopeptides. The protein is Neutral endopeptidase (pepO) of Lactococcus lactis subsp. lactis (strain IL1403) (Streptococcus lactis).